The chain runs to 444 residues: Alpha-1,3-mannosyl-glycoprotein 2-beta-N-acetylglucosaminyltransferase (444 aa).

Over M1–C6 the chain is Cytoplasmic. A helical; Signal-anchor for type II membrane protein transmembrane segment spans residues D7–M24. Topologically, residues R25–S444 are lumenal. Positions K61 to K92 form a coiled coil. Substrate-binding residues include R115, D144, H188, and D210. Mn(2+) is bound at residue D211. D287 acts as the Proton acceptor in catalysis. S318 contributes to the substrate binding site. Residue N351 is glycosylated (N-linked (GlcNAc...) asparagine).

This sequence belongs to the glycosyltransferase 13 family. Mn(2+) serves as cofactor. Post-translationally, glycosylated. As to expression, expressed in roots, stems, leaves and flowers.

It is found in the golgi apparatus membrane. The catalysed reaction is N(4)-(alpha-D-Man-(1-&gt;3)-[alpha-D-Man-(1-&gt;3)-[alpha-D-Man-(1-&gt;6)]-alpha-D-Man-(1-&gt;6)]-beta-D-Man-(1-&gt;4)-beta-D-GlcNAc-(1-&gt;4)-beta-D-GlcNAc)-L-asparaginyl-[protein] (N-glucan mannose isomer 5A1,2) + UDP-N-acetyl-alpha-D-glucosamine = N(4)-{beta-D-GlcNAc-(1-&gt;2)-alpha-D-Man-(1-&gt;3)-[alpha-D-Man-(1-&gt;3)-[alpha-D-Man-(1-&gt;6)]-alpha-D-Man-(1-&gt;6)]-beta-D-Man-(1-&gt;4)-beta-D-GlcNAc-(1-&gt;4)-beta-D-GlcNAc}-L-asparaginyl-[protein] + UDP + H(+). Its pathway is protein modification; protein glycosylation. In terms of biological role, initiates complex N-linked carbohydrate formation. Essential for the conversion of high-mannose to hybrid and complex N-glycans. Required for normal root growth and morphology. This is Alpha-1,3-mannosyl-glycoprotein 2-beta-N-acetylglucosaminyltransferase from Arabidopsis thaliana (Mouse-ear cress).